The chain runs to 22 residues: MKTKAAVLFETHKPFEIVELEL.

The protein belongs to the zinc-containing alcohol dehydrogenase family. In terms of assembly, homotetramer. It depends on NADH as a cofactor.

It is found in the cytoplasm. The catalysed reaction is N,N-dimethyl-4-nitrosoaniline + a primary alcohol = 4-(hydroxylamino)-N,N-dimethylaniline + an aldehyde. It catalyses the reaction ethanol + A = acetaldehyde + AH2. Functionally, this is a novel enzyme, catalytically different from common alcohol dehydrogenases. It is effective in oxidizing ethanol, other primary alcohols and benzylalcohol only in the presence of p-nitroso-N,N-dimethylaniline (NDMA) as an electron acceptor. NADH acts as a cofactor here instead of as a coenzyme. This chain is NDMA-dependent alcohol dehydrogenase, found in Rhodococcus erythropolis (Arthrobacter picolinophilus).